Consider the following 465-residue polypeptide: Poly(A) polymerase I (465 aa).

Catalysis depends on residues Asp-80, Asp-82, and Asp-162. Residues Ala-430–Val-465 form a disordered region. Over residues Arg-448–Pro-459 the composition is skewed to basic residues.

Belongs to the tRNA nucleotidyltransferase/poly(A) polymerase family.

The catalysed reaction is RNA(n) + ATP = RNA(n)-3'-adenine ribonucleotide + diphosphate. Functionally, adds poly(A) tail to the 3' end of many RNAs, which usually targets these RNAs for decay. Plays a significant role in the global control of gene expression, through influencing the rate of transcript degradation, and in the general RNA quality control. In Salmonella typhi, this protein is Poly(A) polymerase I.